A 650-amino-acid chain; its full sequence is Threonine--tRNA ligase, chloroplastic/mitochondrial 2 (650 aa).

Zn(2+)-binding residues include Cys-347, His-398, and His-524.

The protein belongs to the class-II aminoacyl-tRNA synthetase family.

Its subcellular location is the plastid. It localises to the chloroplast. The protein localises to the mitochondrion. It catalyses the reaction tRNA(Thr) + L-threonine + ATP = L-threonyl-tRNA(Thr) + AMP + diphosphate + H(+). In Arabidopsis thaliana (Mouse-ear cress), this protein is Threonine--tRNA ligase, chloroplastic/mitochondrial 2.